The chain runs to 393 residues: Glutamate 5-kinase (393 aa).

Lysine 17 serves as a coordination point for ATP. Residues serine 57, aspartate 144, and asparagine 156 each contribute to the substrate site. 176–177 (SD) is a binding site for ATP. The region spanning 282 to 359 (AGSIAIDAGA…AEIAAILGYA (78 aa)) is the PUA domain. Positions 374-393 (APSGARSEEGGNEKKGKLHA) are disordered. A compositionally biased stretch (basic and acidic residues) spans 379–393 (RSEEGGNEKKGKLHA).

Belongs to the glutamate 5-kinase family.

It localises to the cytoplasm. It catalyses the reaction L-glutamate + ATP = L-glutamyl 5-phosphate + ADP. The protein operates within amino-acid biosynthesis; L-proline biosynthesis; L-glutamate 5-semialdehyde from L-glutamate: step 1/2. Catalyzes the transfer of a phosphate group to glutamate to form L-glutamate 5-phosphate. The polypeptide is Glutamate 5-kinase (Sinorhizobium fredii (strain NBRC 101917 / NGR234)).